Consider the following 101-residue polypeptide: Large ribosomal subunit protein uL23 (101 aa).

Belongs to the universal ribosomal protein uL23 family. In terms of assembly, part of the 50S ribosomal subunit. Contacts protein L29, and trigger factor when it is bound to the ribosome.

In terms of biological role, one of the early assembly proteins it binds 23S rRNA. One of the proteins that surrounds the polypeptide exit tunnel on the outside of the ribosome. Forms the main docking site for trigger factor binding to the ribosome. This is Large ribosomal subunit protein uL23 from Corynebacterium kroppenstedtii (strain DSM 44385 / JCM 11950 / CIP 105744 / CCUG 35717).